The following is a 106-amino-acid chain: Urease subunit beta (106 aa).

It belongs to the urease beta subunit family. Heterotrimer of UreA (gamma), UreB (beta) and UreC (alpha) subunits. Three heterotrimers associate to form the active enzyme.

The protein localises to the cytoplasm. It carries out the reaction urea + 2 H2O + H(+) = hydrogencarbonate + 2 NH4(+). It functions in the pathway nitrogen metabolism; urea degradation; CO(2) and NH(3) from urea (urease route): step 1/1. The chain is Urease subunit beta from Parasynechococcus marenigrum (strain WH8102).